The chain runs to 221 residues: 2-amino-5-formylamino-6-ribosylaminopyrimidin-4(3H)-one 5'-monophosphate deformylase (221 aa).

Fe cation-binding residues include Glu-29, His-31, Asp-40, and His-108.

Belongs to the creatininase superfamily. FAPy deformylase family. In terms of assembly, homodimer. It depends on Fe(2+) as a cofactor. The cofactor is Zn(2+).

It carries out the reaction 2-amino-5-formylamino-6-(5-phospho-D-ribosylamino)pyrimidin-4(3H)-one + H2O = 2,5-diamino-6-(1-D-ribosylamino)pyrimidin-4(3H)-one 5'-phosphate + formate + H(+). The protein operates within cofactor biosynthesis; coenzyme F420 biosynthesis. It participates in cofactor biosynthesis; riboflavin biosynthesis. Functionally, catalyzes the hydrolysis of the formamide of 2-amino-5-formylamino-6-ribosylamino-4(3H)-pyrimidinone 5'-monophosphate (FAPy) to form 2,5-diamino-6-ribosylamino-4(3H)-pyrimidinone 5'-phosphate (APy). This chain is 2-amino-5-formylamino-6-ribosylaminopyrimidin-4(3H)-one 5'-monophosphate deformylase, found in Methanococcus maripaludis (strain C5 / ATCC BAA-1333).